The primary structure comprises 270 residues: 5'-AMP-activated protein kinase subunit beta-1 (270 aa).

The segment at 1-43 is disordered; sequence MGNTSSERAALERHGGHKTPRRDSSGGTKDGDRPKILMDSPED. Glycine 2 carries the N-myristoyl glycine lipid modification. Phosphothreonine is present on threonine 4. 2 positions are modified to phosphoserine: serine 5 and serine 6. Threonine 19 carries the post-translational modification Phosphothreonine. The segment covering 21-36 has biased composition (basic and acidic residues); the sequence is RRDSSGGTKDGDRPKI. Phosphoserine; by autocatalysis occurs at positions 24 and 25. Serine 40, serine 96, serine 101, and serine 108 each carry phosphoserine. Residues 68-163 are glycogen-binding domain; it reads EVNDKAPAQA…QVKKTDFEVF (96 aa). Threonine 148 is modified (phosphothreonine). Position 182 is a phosphoserine (serine 182).

Belongs to the 5'-AMP-activated protein kinase beta subunit family. In terms of assembly, AMPK is a heterotrimer of an alpha catalytic subunit (PRKAA1 or PRKAA2), a beta (PRKAB1 or PRKAB2) and a gamma non-catalytic subunits (PRKAG1, PRKAG2 or PRKAG3). Interacts with FNIP1 and FNIP2. Post-translationally, phosphorylated when associated with the catalytic subunit (PRKAA1 or PRKAA2). Phosphorylated by ULK1; leading to negatively regulate AMPK activity and suggesting the existence of a regulatory feedback loop between ULK1 and AMPK.

Non-catalytic subunit of AMP-activated protein kinase (AMPK), an energy sensor protein kinase that plays a key role in regulating cellular energy metabolism. In response to reduction of intracellular ATP levels, AMPK activates energy-producing pathways and inhibits energy-consuming processes: inhibits protein, carbohydrate and lipid biosynthesis, as well as cell growth and proliferation. AMPK acts via direct phosphorylation of metabolic enzymes, and by longer-term effects via phosphorylation of transcription regulators. Also acts as a regulator of cellular polarity by remodeling the actin cytoskeleton; probably by indirectly activating myosin. Beta non-catalytic subunit acts as a scaffold on which the AMPK complex assembles, via its C-terminus that bridges alpha (PRKAA1 or PRKAA2) and gamma subunits (PRKAG1, PRKAG2 or PRKAG3). This chain is 5'-AMP-activated protein kinase subunit beta-1 (PRKAB1), found in Homo sapiens (Human).